We begin with the raw amino-acid sequence, 236 residues long: Purine nucleoside phosphorylase DeoD-type (236 aa).

Residue histidine 5 participates in a purine D-ribonucleoside binding. Residues glycine 21, arginine 25, arginine 44, and arginine 88–serine 91 contribute to the phosphate site. Residues aspartate 180 to glutamate 182 and serine 204 to aspartate 205 contribute to the a purine D-ribonucleoside site. Aspartate 205 functions as the Proton donor in the catalytic mechanism.

This sequence belongs to the PNP/UDP phosphorylase family. In terms of assembly, homohexamer; trimer of homodimers.

The catalysed reaction is a purine D-ribonucleoside + phosphate = a purine nucleobase + alpha-D-ribose 1-phosphate. It carries out the reaction a purine 2'-deoxy-D-ribonucleoside + phosphate = a purine nucleobase + 2-deoxy-alpha-D-ribose 1-phosphate. Catalyzes the reversible phosphorolytic breakdown of the N-glycosidic bond in the beta-(deoxy)ribonucleoside molecules, with the formation of the corresponding free purine bases and pentose-1-phosphate. This chain is Purine nucleoside phosphorylase DeoD-type, found in Aliivibrio salmonicida (strain LFI1238) (Vibrio salmonicida (strain LFI1238)).